We begin with the raw amino-acid sequence, 655 residues long: Gastrulation defective protein 1 homolog (655 aa).

2 disordered regions span residues 1 to 54 and 83 to 165; these read MQRG…EQMI and AKVF…DEQS. Composition is skewed to basic and acidic residues over residues 23–36, 91–115, and 134–146; these read RSNE…KEST, QIEK…KEDD, and TDKE…SSKD. The span at 147–164 shows a compositional bias: acidic residues; sequence EDSDDDDYSSDEDSDDEQ. WD repeat units follow at residues 180–219, 227–268, 281–321, 330–369, 377–416, 422–467, and 470–510; these read HGSR…SSMR, CENH…ECCK, GHVA…EQLQ, GLRT…VNTT, QKGS…QPLH, FSRY…EVQR, and VSNA…RGAK. Disordered regions lie at residues 544-580 and 633-655; these read KSRT…VASS and AIFS…EADK. Composition is skewed to basic and acidic residues over residues 554–564 and 639–655; these read KARMDPVKSQR and LPAD…EADK.

The protein belongs to the WD repeat GAD-1 family.

The polypeptide is Gastrulation defective protein 1 homolog (Drosophila melanogaster (Fruit fly)).